Here is a 718-residue protein sequence, read N- to C-terminus: Kinesin-2a (718 aa).

Residues 5–335 form the Kinesin motor domain; sequence NIKVIVRCRP…LRYADRAKQI (331 aa). ATP is bound at residue 97 to 104; it reads GQTGAGKT. ADP is bound by residues Gly-100, Gly-102, Lys-103, Thr-104, and Trp-105. Position 104 (Thr-104) interacts with Mg(2+). Residues 432–477 adopt a coiled-coil conformation; that stretch reads SRKAADELEAKRRALAEAKQKRESELEQKEALNKEAIVTLTDLKSQ.

The protein belongs to the TRAFAC class myosin-kinesin ATPase superfamily. Kinesin family. Kinesin II subfamily. As to quaternary structure, monomer.

The protein resides in the cell projection. It is found in the cilium. The protein localises to the flagellum. Its subcellular location is the cytoplasm. It localises to the cytoskeleton. The protein resides in the flagellum axoneme. It is found in the flagellum basal body. Functionally, involved in anterograde intraflagellar transport (IFT). Involved in flagellar assembly. The sequence is that of Kinesin-2a from Giardia intestinalis (strain ATCC 50803 / WB clone C6) (Giardia lamblia).